The following is a 114-amino-acid chain: Aspartate 1-decarboxylase (114 aa).

Ser25 serves as the catalytic Schiff-base intermediate with substrate; via pyruvic acid. Position 25 is a pyruvic acid (Ser) (Ser25). Thr57 lines the substrate pocket. The active-site Proton donor is the Tyr58. Position 73–75 (73–75) interacts with substrate; it reads GAA.

The protein belongs to the PanD family. Heterooctamer of four alpha and four beta subunits. Pyruvate serves as cofactor. In terms of processing, is synthesized initially as an inactive proenzyme, which is activated by self-cleavage at a specific serine bond to produce a beta-subunit with a hydroxyl group at its C-terminus and an alpha-subunit with a pyruvoyl group at its N-terminus.

It is found in the cytoplasm. The catalysed reaction is L-aspartate + H(+) = beta-alanine + CO2. Its pathway is cofactor biosynthesis; (R)-pantothenate biosynthesis; beta-alanine from L-aspartate: step 1/1. In terms of biological role, catalyzes the pyruvoyl-dependent decarboxylation of aspartate to produce beta-alanine. This chain is Aspartate 1-decarboxylase, found in Thermotoga sp. (strain RQ2).